Reading from the N-terminus, the 500-residue chain is Glycerol kinase (500 aa).

T14 is an ADP binding site. T14, T15, and S16 together coordinate ATP. T14 provides a ligand contact to sn-glycerol 3-phosphate. An ADP-binding site is contributed by R18. The sn-glycerol 3-phosphate site is built by R84, E85, and Y136. Glycerol is bound by residues R84, E85, and Y136. The residue at position 232 (H232) is a Phosphohistidine; by HPr. Residue D246 coordinates sn-glycerol 3-phosphate. Residues D246 and Q247 each contribute to the glycerol site. 2 residues coordinate ADP: T268 and G311. Residues T268, G311, Q315, and G412 each coordinate ATP. G412 and N416 together coordinate ADP.

Belongs to the FGGY kinase family. In terms of assembly, homotetramer and homodimer (in equilibrium). In terms of processing, the phosphoenolpyruvate-dependent sugar phosphotransferase system (PTS), including enzyme I, and histidine-containing protein (HPr) are required for the phosphorylation, which leads to the activation of the enzyme.

It catalyses the reaction glycerol + ATP = sn-glycerol 3-phosphate + ADP + H(+). Its pathway is polyol metabolism; glycerol degradation via glycerol kinase pathway; sn-glycerol 3-phosphate from glycerol: step 1/1. Activated by phosphorylation and inhibited by fructose 1,6-bisphosphate (FBP). Functionally, key enzyme in the regulation of glycerol uptake and metabolism. Catalyzes the phosphorylation of glycerol to yield sn-glycerol 3-phosphate. In Limosilactobacillus reuteri (strain DSM 20016) (Lactobacillus reuteri), this protein is Glycerol kinase.